The sequence spans 1384 residues: ATP-dependent RNA helicase TDRD9 (1384 aa).

The tract at residues E35–V60 is disordered. Basic and acidic residues predominate over residues A36–E46. The 167-residue stretch at I144–N310 folds into the Helicase ATP-binding domain. G157–S164 contacts ATP. A DEAH box motif is present at residues D256 to H259. The Helicase C-terminal domain occupies S379–G546. The 61-residue stretch at H946–L1006 folds into the Tudor domain.

It belongs to the DEAD box helicase family. DEAH subfamily. In terms of assembly, interacts with piRNA-associated proteins PIWIL1 and PIWIL4.

The protein localises to the cytoplasm. It is found in the nucleus. It catalyses the reaction ATP + H2O = ADP + phosphate + H(+). Functionally, ATP-binding RNA helicase which plays a central role during spermatogenesis by repressing transposable elements and preventing their mobilization, which is essential for the germline integrity. Acts via the piRNA metabolic process, which mediates the repression of transposable elements during meiosis by forming complexes composed of piRNAs and Piwi proteins and governs the methylation and subsequent repression of transposons. Acts downstream of piRNA biogenesis: exclusively required for transposon silencing in the nucleus, suggesting that it acts as a nuclear effector in the nucleus together with PIWIL4. This is ATP-dependent RNA helicase TDRD9 from Rattus norvegicus (Rat).